Consider the following 468-residue polypeptide: Argininosuccinate lyase (468 aa).

Residues S33, N121, and T166 each contribute to the 2-(N(omega)-L-arginino)succinate site. H167 acts as the Proton acceptor in catalysis. S288 (proton donor) is an active-site residue. The 2-(N(omega)-L-arginino)succinate site is built by N296, Y328, Q333, and K336.

The protein belongs to the lyase 1 family. Argininosuccinate lyase subfamily. Homotetramer.

The enzyme catalyses 2-(N(omega)-L-arginino)succinate = fumarate + L-arginine. It participates in amino-acid biosynthesis; L-arginine biosynthesis; L-arginine from L-ornithine and carbamoyl phosphate: step 3/3. The polypeptide is Argininosuccinate lyase (ARG4) (Candida albicans (Yeast)).